Here is a 623-residue protein sequence, read N- to C-terminus: MEFQEALKYIPSNSICSNPNYKLIWKKIQQYSYEVNSSSSLILSDISSSSYDLSGIFEKSLMIFLMIENFTTQYSNQSYLYRFLNEPPINNNNNNTKSEFQQIITDPSNKESLKSLLQFSKTINISKIFENNTQPIIISPPQQSQQPPPPTSGNNFFSILSSNINTINNNSNNNNNNNNCKSYKKQQTSKGSATASTNTTTDIYDEQQMKLQQLQQQYYQQQLNELQQINQQISQKVNLLQQTTPTTTNTSTTATTTTIPPSPSNTTTTTTNNNNNNIPQQTSISTASTSIKIISEDGVSNNKRKRRPRAPAPFLDSLYCHSCGETQTSQWRRGPDGCKSLCNACGIRFANIVSKEKALAVKEKNISINMLLNESSNQQQQQQQQQQQQQIIQQQQIIQQQQQKDDHLPLSRPSSFSSQSNSQQDDSLPLSRPSSFSSQSSSSSSSFLSSLLSSSSPPIPSTTTTTTTTTTTTSPTISSESLNFSSATNTPTNLSPNLQSINHNDKLINNNNNNNTALEGFPPTFNINNYNNNNNIDKLSSSKDSTENNGYNYYSSYNNYNISEYVPSPAYQNSRMTNVGIGSFKRKLSNEDQLNGLSAIVTASEQLFFGISNDVNQGSNVKL.

Disordered regions lie at residues 137–156 (IISPPQQSQQPPPPTSGNNF), 167–197 (INNNSNNNNNNNNCKSYKKQQTSKGSATAST), and 245–289 (PTTT…TAST). Over residues 167-179 (INNNSNNNNNNNN) the composition is skewed to low complexity. A compositionally biased stretch (polar residues) spans 185–197 (KQQTSKGSATAST). A GATA-type zinc finger spans residues 320–345 (CHSCGETQTSQWRRGPDGCKSLCNAC). A disordered region spans residues 398–509 (IQQQQQKDDH…SINHNDKLIN (112 aa)). The span at 410-482 (LSRPSSFSSQ…TSPTISSESL (73 aa)) shows a compositional bias: low complexity. Positions 483-502 (NFSSATNTPTNLSPNLQSIN) are enriched in polar residues.

The polypeptide is GATA zinc finger domain-containing protein 6 (gtaF) (Dictyostelium discoideum (Social amoeba)).